Here is a 34-residue protein sequence, read N- to C-terminus: Cytochrome b6-f complex subunit 8 (34 aa).

A helical membrane pass occupies residues 3-23 (IFQIGWAALAAIFTFSIAMVV).

Belongs to the PetN family. The 4 large subunits of the cytochrome b6-f complex are cytochrome b6, subunit IV (17 kDa polypeptide, PetD), cytochrome f and the Rieske protein, while the 4 small subunits are PetG, PetL, PetM and PetN. The complex functions as a dimer.

It localises to the cellular thylakoid membrane. Component of the cytochrome b6-f complex, which mediates electron transfer between photosystem II (PSII) and photosystem I (PSI), cyclic electron flow around PSI, and state transitions. The polypeptide is Cytochrome b6-f complex subunit 8 (Prochlorococcus marinus subsp. pastoris (strain CCMP1986 / NIES-2087 / MED4)).